Consider the following 131-residue polypeptide: Translation initiation factor 5A (131 aa).

Lys36 is subject to Hypusine.

Belongs to the eIF-5A family.

The protein localises to the cytoplasm. In terms of biological role, functions by promoting the formation of the first peptide bond. The chain is Translation initiation factor 5A from Saccharolobus solfataricus (strain ATCC 35092 / DSM 1617 / JCM 11322 / P2) (Sulfolobus solfataricus).